A 407-amino-acid chain; its full sequence is Probable endo-beta-1,4-glucanase celB (407 aa).

A signal peptide spans 1-18; it reads MAQTLAAASLVLVPLVTA. The N-linked (GlcNAc...) asparagine glycan is linked to Asn-136. Glu-216 functions as the Nucleophile in the catalytic mechanism. The Proton donor role is filled by Glu-221.

Belongs to the glycosyl hydrolase 7 (cellulase C) family.

It localises to the secreted. It carries out the reaction Endohydrolysis of (1-&gt;4)-beta-D-glucosidic linkages in cellulose, lichenin and cereal beta-D-glucans.. Functionally, has endoglucanase activity on substrates containing beta-1,4 glycosidic bonds, like in carboxymethylcellulose (CMC), hydroxyethylcellulose (HEC) and beta-glucan. Involved in the degradation of complex natural cellulosic substrates. In Aspergillus fumigatus (strain ATCC MYA-4609 / CBS 101355 / FGSC A1100 / Af293) (Neosartorya fumigata), this protein is Probable endo-beta-1,4-glucanase celB (celB).